The sequence spans 1409 residues: Mediator of RNA polymerase II transcription subunit 23 (1409 aa).

Residues alanine 1359–glutamine 1409 form a disordered region.

The protein belongs to the Mediator complex subunit 23 family. In terms of assembly, component of the Mediator complex.

It is found in the nucleus. Functionally, component of the Mediator complex, a coactivator involved in the regulated transcription of nearly all RNA polymerase II-dependent genes. Mediator functions as a bridge to convey information from gene-specific regulatory proteins to the basal RNA polymerase II transcription machinery. Mediator is recruited to promoters by direct interactions with regulatory proteins and serves as a scaffold for the assembly of a functional preinitiation complex with RNA polymerase II and the general transcription factors. The sequence is that of Mediator of RNA polymerase II transcription subunit 23 (MED23) from Aedes aegypti (Yellowfever mosquito).